A 178-amino-acid chain; its full sequence is MRDRWLKRAVGARHYRPWLTERGSLTRRLQQHSRQFAVQPLHLARKKPPLAEAQLLQVLPRQHTLQRDVILRCDGEAVVFAHSLLPQQAMRGTWRGLGRLGSHSLGSALFADPRMCRGALQYKKLSPQHFLYRLAVAHIPAMRGPIWARRSVFRLGRKAVLVSELFLPSVLKLPLINK.

Arg67, Leu105, and Glu164 together coordinate substrate.

Belongs to the UbiC family.

It is found in the cytoplasm. The enzyme catalyses chorismate = 4-hydroxybenzoate + pyruvate. It participates in cofactor biosynthesis; ubiquinone biosynthesis. Its function is as follows. Removes the pyruvyl group from chorismate, with concomitant aromatization of the ring, to provide 4-hydroxybenzoate (4HB) for the ubiquinone pathway. The polypeptide is Probable chorismate pyruvate-lyase (Methylobacillus flagellatus (strain ATCC 51484 / DSM 6875 / VKM B-1610 / KT)).